We begin with the raw amino-acid sequence, 117 residues long: MDKKASRIRRATRARRKIAELCATRLVVHRTPRHTYAQVIAPNGSEVIAAASTVEKAIREQLGSTSNKAAAEAIGKLIAERAIEKGITNVAFDRSGFQYHGRVAALAESAREAGLKF.

Belongs to the universal ribosomal protein uL18 family. Part of the 50S ribosomal subunit; part of the 5S rRNA/L5/L18/L25 subcomplex. Contacts the 5S and 23S rRNAs.

Functionally, this is one of the proteins that bind and probably mediate the attachment of the 5S RNA into the large ribosomal subunit, where it forms part of the central protuberance. In Aliivibrio fischeri (strain ATCC 700601 / ES114) (Vibrio fischeri), this protein is Large ribosomal subunit protein uL18.